The sequence spans 275 residues: Large ribosomal subunit protein uL2 (275 aa).

Residues 223–275 (VAMNPVDHPHGGGEGRTSGGRHPVSPWGQPTKGYKTRSNKRTDKYIVRRRNKK) are disordered.

Belongs to the universal ribosomal protein uL2 family. As to quaternary structure, part of the 50S ribosomal subunit. Forms a bridge to the 30S subunit in the 70S ribosome.

Its function is as follows. One of the primary rRNA binding proteins. Required for association of the 30S and 50S subunits to form the 70S ribosome, for tRNA binding and peptide bond formation. It has been suggested to have peptidyltransferase activity; this is somewhat controversial. Makes several contacts with the 16S rRNA in the 70S ribosome. The polypeptide is Large ribosomal subunit protein uL2 (Shewanella piezotolerans (strain WP3 / JCM 13877)).